The primary structure comprises 354 residues: Probable L-ascorbate-6-phosphate lactonase UlaG (354 aa).

Belongs to the UlaG family. Requires a divalent metal cation as cofactor.

It localises to the cytoplasm. It carries out the reaction L-ascorbate 6-phosphate + H2O = 3-dehydro-L-gulonate 6-phosphate. It participates in cofactor degradation; L-ascorbate degradation; D-xylulose 5-phosphate from L-ascorbate: step 1/4. In terms of biological role, probably catalyzes the hydrolysis of L-ascorbate-6-P into 3-keto-L-gulonate-6-P. Is essential for L-ascorbate utilization under anaerobic conditions. In Salmonella gallinarum (strain 287/91 / NCTC 13346), this protein is Probable L-ascorbate-6-phosphate lactonase UlaG.